The sequence spans 250 residues: Precorrin-4 C(11)-methyltransferase (250 aa).

The protein belongs to the precorrin methyltransferase family.

It carries out the reaction precorrin-4 + S-adenosyl-L-methionine = precorrin-5 + S-adenosyl-L-homocysteine. The protein operates within cofactor biosynthesis; adenosylcobalamin biosynthesis; cob(II)yrinate a,c-diamide from precorrin-2 (aerobic route): step 4/10. Its function is as follows. Catalyzes the methylation of C-11 in precorrin-4 to form precorrin-5. The chain is Precorrin-4 C(11)-methyltransferase (cobM) from Pseudomonas aeruginosa (strain ATCC 15692 / DSM 22644 / CIP 104116 / JCM 14847 / LMG 12228 / 1C / PRS 101 / PAO1).